We begin with the raw amino-acid sequence, 1355 residues long: DNA-directed RNA polymerase subunit beta' (1355 aa).

Residues Cys-219, Cys-293, Cys-300, and Cys-303 each coordinate Zn(2+). The interval 1331–1355 (AEVEVDDEVDDDYEDDDEDDDDYED) is disordered.

Belongs to the RNA polymerase beta' chain family. RpoC2 subfamily. In terms of assembly, in cyanobacteria the RNAP catalytic core is composed of 2 alpha, 1 beta, 1 beta', 1 gamma and 1 omega subunit. When a sigma factor is associated with the core the holoenzyme is formed, which can initiate transcription. The cofactor is Zn(2+).

It catalyses the reaction RNA(n) + a ribonucleoside 5'-triphosphate = RNA(n+1) + diphosphate. Functionally, DNA-dependent RNA polymerase catalyzes the transcription of DNA into RNA using the four ribonucleoside triphosphates as substrates. This Nostoc sp. (strain PCC 7120 / SAG 25.82 / UTEX 2576) protein is DNA-directed RNA polymerase subunit beta'.